A 221-amino-acid polypeptide reads, in one-letter code: Ras-related protein Rab-27A (221 aa).

An N-acetylserine modification is found at serine 2. The residue at position 2 (serine 2) is a Phosphoserine. Position 16-24 (16-24 (GDSGVGKTS)) interacts with GTP. Positions 38 to 46 (FITTVGIDF) match the Effector region motif. GTP is bound by residues 74 to 78 (DTAGQ), 133 to 136 (NKSD), and 163 to 165 (SAA). The cysteines at positions 123 and 188 are disulfide-linked. Residues cysteine 219 and cysteine 221 are each lipidated (S-geranylgeranyl cysteine). Position 221 is a cysteine methyl ester (cysteine 221).

This sequence belongs to the small GTPase superfamily. Rab family. As to quaternary structure, binds SYTL1, SLAC2B, MYRIP, SYTL3, SYTL4 and SYTL5. Interacts with RPH3A and RPH3A. Binds MLPH and SYTL2. Interacts with UNC13D. Does not interact with the BLOC-3 complex (heterodimer of HPS1 and HPS4). Interacts (GDP-bound form preferentially) with DENND10. In terms of tissue distribution, found in all the examined tissues except in brain. Low expression was found in thymus, kidney, muscle and placenta. Detected in melanocytes, and in most tumor cell lines examined. Expressed in cytotoxic T-lymphocytes (CTL) and mast cells.

The protein localises to the membrane. The protein resides in the melanosome. It localises to the late endosome. Its subcellular location is the lysosome. It catalyses the reaction GTP + H2O = GDP + phosphate + H(+). With respect to regulation, regulated by guanine nucleotide exchange factors (GEFs) which promote the exchange of bound GDP for free GTP, GTPase activating proteins (GAPs) which increase the GTP hydrolysis activity, and GDP dissociation inhibitors which inhibit the dissociation of the nucleotide from the GTPase. Activated by GEFs such as DENND10. Its function is as follows. Small GTPase which cycles between active GTP-bound and inactive GDP-bound states. In its active state, binds to a variety of effector proteins to regulate homeostasis of late endocytic pathway, including endosomal positioning, maturation and secretion. Plays a role in cytotoxic granule exocytosis in lymphocytes. Required for both granule maturation and granule docking and priming at the immunologic synapse. In Homo sapiens (Human), this protein is Ras-related protein Rab-27A (RAB27A).